An 86-amino-acid chain; its full sequence is Cardiotoxin homolog TA-ctx-like (86 aa).

The first 21 residues, M1–T21, serve as a signal peptide directing secretion. 4 disulfides stabilise this stretch: C24–C45, C38–C62, C66–C78, and C79–C84.

The protein belongs to the three-finger toxin family. Short-chain subfamily. Orphan group IX sub-subfamily. In terms of tissue distribution, expressed by the venom gland.

Its subcellular location is the secreted. This is Cardiotoxin homolog TA-ctx-like from Bungarus multicinctus (Many-banded krait).